A 314-amino-acid chain; its full sequence is Acetyl-coenzyme A carboxylase carboxyl transferase subunit alpha (314 aa).

A CoA carboxyltransferase C-terminal domain is found at Glu32–Ser289.

Belongs to the AccA family. Acetyl-CoA carboxylase is a heterohexamer composed of biotin carboxyl carrier protein (AccB), biotin carboxylase (AccC) and two subunits each of ACCase subunit alpha (AccA) and ACCase subunit beta (AccD).

The protein localises to the cytoplasm. The enzyme catalyses N(6)-carboxybiotinyl-L-lysyl-[protein] + acetyl-CoA = N(6)-biotinyl-L-lysyl-[protein] + malonyl-CoA. It functions in the pathway lipid metabolism; malonyl-CoA biosynthesis; malonyl-CoA from acetyl-CoA: step 1/1. Its function is as follows. Component of the acetyl coenzyme A carboxylase (ACC) complex. First, biotin carboxylase catalyzes the carboxylation of biotin on its carrier protein (BCCP) and then the CO(2) group is transferred by the carboxyltransferase to acetyl-CoA to form malonyl-CoA. In Staphylococcus aureus (strain NCTC 8325 / PS 47), this protein is Acetyl-coenzyme A carboxylase carboxyl transferase subunit alpha.